The sequence spans 625 residues: Chaperone protein DnaK (625 aa).

Thr197 carries the phosphothreonine; by autocatalysis modification. The disordered stretch occupies residues 598 to 625; the sequence is AYAKEQGGTQQGTDTKKKDDDVIDAEVE.

The protein belongs to the heat shock protein 70 family.

Its function is as follows. Acts as a chaperone. This is Chaperone protein DnaK from Helicobacter hepaticus (strain ATCC 51449 / 3B1).